The chain runs to 494 residues: Glutamyl-tRNA(Gln) amidotransferase subunit A (494 aa).

Residues Lys81 and Ser156 each act as charge relay system in the active site. Ser180 (acyl-ester intermediate) is an active-site residue.

Belongs to the amidase family. GatA subfamily. Heterotrimer of A, B and C subunits.

It catalyses the reaction L-glutamyl-tRNA(Gln) + L-glutamine + ATP + H2O = L-glutaminyl-tRNA(Gln) + L-glutamate + ADP + phosphate + H(+). Allows the formation of correctly charged Gln-tRNA(Gln) through the transamidation of misacylated Glu-tRNA(Gln) in organisms which lack glutaminyl-tRNA synthetase. The reaction takes place in the presence of glutamine and ATP through an activated gamma-phospho-Glu-tRNA(Gln). In Mycolicibacterium gilvum (strain PYR-GCK) (Mycobacterium gilvum (strain PYR-GCK)), this protein is Glutamyl-tRNA(Gln) amidotransferase subunit A.